The chain runs to 64 residues: Large ribosomal subunit protein uL29 (64 aa).

Belongs to the universal ribosomal protein uL29 family.

The protein is Large ribosomal subunit protein uL29 of Dichelobacter nodosus (strain VCS1703A).